The chain runs to 429 residues: 4-hydroxy-3-methylbut-2-en-1-yl diphosphate synthase (flavodoxin) (429 aa).

[4Fe-4S] cluster is bound by residues C317, C320, C363, and E370.

This sequence belongs to the IspG family. Requires [4Fe-4S] cluster as cofactor.

The enzyme catalyses (2E)-4-hydroxy-3-methylbut-2-enyl diphosphate + oxidized [flavodoxin] + H2O + 2 H(+) = 2-C-methyl-D-erythritol 2,4-cyclic diphosphate + reduced [flavodoxin]. It participates in isoprenoid biosynthesis; isopentenyl diphosphate biosynthesis via DXP pathway; isopentenyl diphosphate from 1-deoxy-D-xylulose 5-phosphate: step 5/6. Converts 2C-methyl-D-erythritol 2,4-cyclodiphosphate (ME-2,4cPP) into 1-hydroxy-2-methyl-2-(E)-butenyl 4-diphosphate. This Deinococcus radiodurans (strain ATCC 13939 / DSM 20539 / JCM 16871 / CCUG 27074 / LMG 4051 / NBRC 15346 / NCIMB 9279 / VKM B-1422 / R1) protein is 4-hydroxy-3-methylbut-2-en-1-yl diphosphate synthase (flavodoxin).